A 137-amino-acid polypeptide reads, in one-letter code: Large ribosomal subunit protein uL16 (137 aa).

It belongs to the universal ribosomal protein uL16 family. Part of the 50S ribosomal subunit.

Binds 23S rRNA and is also seen to make contacts with the A and possibly P site tRNAs. This is Large ribosomal subunit protein uL16 from Magnetococcus marinus (strain ATCC BAA-1437 / JCM 17883 / MC-1).